Reading from the N-terminus, the 242-residue chain is Probable transcriptional regulatory protein Bamb_2332 (242 aa).

The protein belongs to the TACO1 family.

It is found in the cytoplasm. The chain is Probable transcriptional regulatory protein Bamb_2332 from Burkholderia ambifaria (strain ATCC BAA-244 / DSM 16087 / CCUG 44356 / LMG 19182 / AMMD) (Burkholderia cepacia (strain AMMD)).